A 132-amino-acid chain; its full sequence is MSTHDPISDLITRIRNAQMRSKSKVTTPGSKMRASVLEVLKSEGYIRGYATLEHPSGRSEIEIELKYFDGEPVIREIERVSKPGRRVYTSVKNLPRVNNGLGISVLSTPKGIMADHSARDANVGGEVLFTVF.

The protein belongs to the universal ribosomal protein uS8 family. Part of the 30S ribosomal subunit. Contacts proteins S5 and S12.

One of the primary rRNA binding proteins, it binds directly to 16S rRNA central domain where it helps coordinate assembly of the platform of the 30S subunit. The sequence is that of Small ribosomal subunit protein uS8 from Bradyrhizobium sp. (strain BTAi1 / ATCC BAA-1182).